Reading from the N-terminus, the 329-residue chain is Probable carboxylesterase 13 (329 aa).

Met1 is subject to N-acetylmethionine. An Involved in the stabilization of the negatively charged intermediate by the formation of the oxyanion hole motif is present at residues His81–Gly83. Active-site residues include Ser165, Asp269, and His302.

This sequence belongs to the 'GDXG' lipolytic enzyme family. In terms of tissue distribution, expressed in flowers.

The catalysed reaction is a carboxylic ester + H2O = an alcohol + a carboxylate + H(+). Functionally, carboxylesterase acting on esters with varying acyl chain length. The polypeptide is Probable carboxylesterase 13 (CXE13) (Arabidopsis thaliana (Mouse-ear cress)).